Here is a 516-residue protein sequence, read N- to C-terminus: Probable serine/threonine-protein kinase DDB_G0293276 (516 aa).

The segment at 69–115 (SIEIDDENPYNTNNNNNSNNNNNNNNNNCNNSNNSNNNKNINSLDNI) is disordered. Residues 79–115 (NTNNNNNSNNNNNNNNNNCNNSNNSNNNKNINSLDNI) show a composition bias toward low complexity. Positions 232–479 (YKHVECIGKG…SKDIKNHPYF (248 aa)) constitute a Protein kinase domain. ATP contacts are provided by residues 238–246 (IGKGGYGVV) and lysine 261. Catalysis depends on aspartate 350, which acts as the Proton acceptor.

The protein belongs to the protein kinase superfamily. AGC Ser/Thr protein kinase family.

It catalyses the reaction L-seryl-[protein] + ATP = O-phospho-L-seryl-[protein] + ADP + H(+). The enzyme catalyses L-threonyl-[protein] + ATP = O-phospho-L-threonyl-[protein] + ADP + H(+). The protein is Probable serine/threonine-protein kinase DDB_G0293276 of Dictyostelium discoideum (Social amoeba).